The primary structure comprises 123 residues: Large ribosomal subunit protein uL14 (123 aa).

It belongs to the universal ribosomal protein uL14 family. In terms of assembly, part of the 50S ribosomal subunit. Forms a cluster with proteins L3 and L19. In the 70S ribosome, L14 and L19 interact and together make contacts with the 16S rRNA in bridges B5 and B8.

Functionally, binds to 23S rRNA. Forms part of two intersubunit bridges in the 70S ribosome. In Cronobacter sakazakii (strain ATCC BAA-894) (Enterobacter sakazakii), this protein is Large ribosomal subunit protein uL14.